Consider the following 327-residue polypeptide: GMP reductase (327 aa).

The active-site Thioimidate intermediate is the Cys-176. 205 to 228 serves as a coordination point for NADP(+); that stretch reads IIADGGIRTHGDIAKSIRFGASMV.

The protein belongs to the IMPDH/GMPR family. GuaC type 2 subfamily.

The catalysed reaction is IMP + NH4(+) + NADP(+) = GMP + NADPH + 2 H(+). Its function is as follows. Catalyzes the irreversible NADPH-dependent deamination of GMP to IMP. It functions in the conversion of nucleobase, nucleoside and nucleotide derivatives of G to A nucleotides, and in maintaining the intracellular balance of A and G nucleotides. This Streptococcus agalactiae serotype V (strain ATCC BAA-611 / 2603 V/R) protein is GMP reductase.